Reading from the N-terminus, the 442-residue chain is Cytokine receptor-like factor 3 (442 aa).

N-acetylmethionine is present on methionine 1. The stretch at 10-57 forms a coiled coil; it reads ELLLQEARENVEAAQSYRRELGHRLEGLREARRQIKESASQTRDVLKQ. In terms of domain architecture, Fibronectin type-III spans 181-274; the sequence is PPVQIEELIE…PQIGHSTLVP (94 aa).

It belongs to the cytokine receptor-like factor 3 family. In terms of tissue distribution, expressed in several embryonic and adult tissues, including adult and fetal brain, liver, spleen and pancreas. Expressed in adult, but not fetal kidney. Expressed in skin and squamous cell carcinoma (SCC) and in several other cancer types. Also detected in lesion actinic keratosis (AK).

The protein resides in the cytoplasm. In terms of biological role, may play a role in the negative regulation of cell cycle progression. This is Cytokine receptor-like factor 3 (CRLF3) from Homo sapiens (Human).